Here is a 223-residue protein sequence, read N- to C-terminus: Phosphoribosylformylglycinamidine synthase subunit PurQ (223 aa).

The region spanning 3–223 is the Glutamine amidotransferase type-1 domain; that stretch reads FAVLVFPGSN…MVKSWREQHV (221 aa). C85 (nucleophile) is an active-site residue. Residues H193 and E195 contribute to the active site.

In terms of assembly, part of the FGAM synthase complex composed of 1 PurL, 1 PurQ and 2 PurS subunits.

It is found in the cytoplasm. The catalysed reaction is N(2)-formyl-N(1)-(5-phospho-beta-D-ribosyl)glycinamide + L-glutamine + ATP + H2O = 2-formamido-N(1)-(5-O-phospho-beta-D-ribosyl)acetamidine + L-glutamate + ADP + phosphate + H(+). It carries out the reaction L-glutamine + H2O = L-glutamate + NH4(+). It functions in the pathway purine metabolism; IMP biosynthesis via de novo pathway; 5-amino-1-(5-phospho-D-ribosyl)imidazole from N(2)-formyl-N(1)-(5-phospho-D-ribosyl)glycinamide: step 1/2. Part of the phosphoribosylformylglycinamidine synthase complex involved in the purines biosynthetic pathway. Catalyzes the ATP-dependent conversion of formylglycinamide ribonucleotide (FGAR) and glutamine to yield formylglycinamidine ribonucleotide (FGAM) and glutamate. The FGAM synthase complex is composed of three subunits. PurQ produces an ammonia molecule by converting glutamine to glutamate. PurL transfers the ammonia molecule to FGAR to form FGAM in an ATP-dependent manner. PurS interacts with PurQ and PurL and is thought to assist in the transfer of the ammonia molecule from PurQ to PurL. In Staphylococcus aureus (strain USA300), this protein is Phosphoribosylformylglycinamidine synthase subunit PurQ.